The chain runs to 359 residues: Type-1 angiotensin II receptor (359 aa).

Topologically, residues 1 to 25 (MMLNSSTEDGIKRIQDDCPKAGRHN) are extracellular. N-linked (GlcNAc...) asparagine glycosylation is present at Asn-4. 2 residues coordinate angiotensin II: Gln-15 and Asp-17. Cystine bridges form between Cys-18–Cys-274 and Cys-101–Cys-180. The chain crosses the membrane as a helical span at residues 26-55 (YIFVMIPTLYSIIFVVGIFGNSLAVIVIYF). Residues 56–61 (YMKLKT) are Cytoplasmic-facing. Residues 62-89 (VASVFLLNLALADLCFLLTLPLWAVYTA) form a helical membrane-spanning segment. At 90–98 (MEYRWPFGN) the chain is on the extracellular side. Residues 99–125 (YLCKIASASVSFNLYASVFLLTCLSID) traverse the membrane as a helical segment. Residues 126–141 (RYLAIVHPMKSRLRRT) are Cytoplasmic-facing. A helical transmembrane segment spans residues 142–165 (MLVAKVTCIIIWLLAGLASLPAII). Residues 166-190 (HRNVFFIENTNITVCAFHYESQNST) lie on the Extracellular side of the membrane. Residue Arg-167 coordinates angiotensin II. The N-linked (GlcNAc...) asparagine glycan is linked to Asn-176. Angiotensin II contacts are provided by Phe-182, His-183, and Tyr-184. Asn-188 is a glycosylation site (N-linked (GlcNAc...) asparagine). Residues 191-216 (LPIGLGLTKNILGFLFPFLIILTSYT) form a helical membrane-spanning segment. Position 199 (Lys-199) interacts with angiotensin II. Topologically, residues 217-239 (LIWKALKKAYEIQKNKPRNDDIF) are cytoplasmic. The helical transmembrane segment at 240-268 (KIIMAIVLFFFFSWVPHQIFTFLDVLIQL) threads the bilayer. The Extracellular portion of the chain corresponds to 269-278 (GVIHDCRIAD). The helical transmembrane segment at 279–304 (IVDTAMPITICIAYFNNCLNPLFYGF) threads the bilayer. The Cytoplasmic segment spans residues 305–359 (LGKKFKKYFLQLLKYIPPKAKSHSNLSTKMSTLSYRPSDNVSSSSKKPVPCFEVE). Polar residues predominate over residues 335–350 (STLSYRPSDNVSSSSK). The disordered stretch occupies residues 335–359 (STLSYRPSDNVSSSSKKPVPCFEVE). A lipid anchor (S-palmitoyl cysteine) is attached at Cys-355.

This sequence belongs to the G-protein coupled receptor 1 family. As to quaternary structure, interacts with MAS1. Interacts with ARRB1. Interacts with FLNA (via filamin repeat 21); increases PKA-mediated phosphorylation of FLNA. C-terminal Ser or Thr residues may be phosphorylated.

It localises to the cell membrane. Receptor for angiotensin II, a vasoconstricting peptide, which acts as a key regulator of blood pressure and sodium retention by the kidney. The activated receptor in turn couples to G-alpha proteins G(q) (GNAQ, GNA11, GNA14 or GNA15) and thus activates phospholipase C and increases the cytosolic Ca(2+) concentrations, which in turn triggers cellular responses such as stimulation of protein kinase C. This chain is Type-1 angiotensin II receptor (AGTR1), found in Oryctolagus cuniculus (Rabbit).